The sequence spans 114 residues: Fumarate reductase subunit D (114 aa).

Helical transmembrane passes span 24 to 44 (ISALAFPVLILILGILLPLGI), 49 to 69 (GIIAFAHHWFGKLVILVLTIF), and 94 to 114 (LIFYGLAVLYTVVAIWGVASI).

The protein belongs to the FrdD family. In terms of assembly, part of an enzyme complex containing four subunits: a flavoprotein (FrdA), an iron-sulfur protein (FrdB), and two hydrophobic anchor proteins (FrdC and FrdD).

The protein resides in the cell inner membrane. Anchors the catalytic components of the fumarate reductase complex to the cell membrane, binds quinones. This chain is Fumarate reductase subunit D, found in Actinobacillus succinogenes (strain ATCC 55618 / DSM 22257 / CCUG 43843 / 130Z).